A 282-amino-acid chain; its full sequence is Hydroxyethylthiazole kinase 2 (282 aa).

M44 is a binding site for substrate. ATP contacts are provided by R120 and S179. G206 is a binding site for substrate.

It belongs to the Thz kinase family. It depends on Mg(2+) as a cofactor.

It catalyses the reaction 5-(2-hydroxyethyl)-4-methylthiazole + ATP = 4-methyl-5-(2-phosphooxyethyl)-thiazole + ADP + H(+). It functions in the pathway cofactor biosynthesis; thiamine diphosphate biosynthesis; 4-methyl-5-(2-phosphoethyl)-thiazole from 5-(2-hydroxyethyl)-4-methylthiazole: step 1/1. Catalyzes the phosphorylation of the hydroxyl group of 4-methyl-5-beta-hydroxyethylthiazole (THZ). In Methanosphaera stadtmanae (strain ATCC 43021 / DSM 3091 / JCM 11832 / MCB-3), this protein is Hydroxyethylthiazole kinase 2.